The sequence spans 180 residues: Adenine phosphoribosyltransferase (180 aa).

It belongs to the purine/pyrimidine phosphoribosyltransferase family. Homodimer.

It localises to the cytoplasm. It carries out the reaction AMP + diphosphate = 5-phospho-alpha-D-ribose 1-diphosphate + adenine. It functions in the pathway purine metabolism; AMP biosynthesis via salvage pathway; AMP from adenine: step 1/1. In terms of biological role, catalyzes a salvage reaction resulting in the formation of AMP, that is energically less costly than de novo synthesis. The polypeptide is Adenine phosphoribosyltransferase (Butyrivibrio fibrisolvens).